A 161-amino-acid polypeptide reads, in one-letter code: Cyclic pyranopterin monophosphate synthase (161 aa).

Residues 75–77 (LCH) and 113–114 (ME) contribute to the substrate site. Asp128 is an active-site residue.

This sequence belongs to the MoaC family. Homohexamer; trimer of dimers.

It carries out the reaction (8S)-3',8-cyclo-7,8-dihydroguanosine 5'-triphosphate = cyclic pyranopterin phosphate + diphosphate. It functions in the pathway cofactor biosynthesis; molybdopterin biosynthesis. Functionally, catalyzes the conversion of (8S)-3',8-cyclo-7,8-dihydroguanosine 5'-triphosphate to cyclic pyranopterin monophosphate (cPMP). This Salmonella arizonae (strain ATCC BAA-731 / CDC346-86 / RSK2980) protein is Cyclic pyranopterin monophosphate synthase.